Consider the following 750-residue polypeptide: Photosystem I P700 chlorophyll a apoprotein A1 (750 aa).

Transmembrane regions (helical) follow at residues 70–93, 156–179, 195–219, 291–309, 346–369, 385–411, 433–455, and 531–549; these read VFSAHFGQLSIIFLWLSGMYFHGA, LYCTAIGALVFAALMLFAGWFHYH, LNHHLAGLLGLGSLSWAGHQVHVSL, IAHHHLAIAILFLIAGHMY, WHAQLSLNLAMLGSLTIVVAHHMY, LSLFTHHMWIGGFLIVGAAAHAAIFMV, AIISHLNWACIFLGFHSFGLYIH, and FLVHHIHAFTIHVTVLILL. 2 residues coordinate [4Fe-4S] cluster: Cys-573 and Cys-582. 2 helical membrane passes run 589–610 and 664–686; these read HVFLGLFWMYNAISVVIFHFSW and LSAYGLFFLGAHFVWAFSLMFLF. His-675 is a binding site for chlorophyll a'. Chlorophyll a-binding residues include Met-683 and Tyr-691. Trp-692 lines the phylloquinone pocket. Residues 724 to 744 traverse the membrane as a helical segment; that stretch reads AVGVTHYLLGGIATTWAFFLA.

Belongs to the PsaA/PsaB family. The PsaA/B heterodimer binds the P700 chlorophyll special pair and subsequent electron acceptors. PSI consists of a core antenna complex that captures photons, and an electron transfer chain that converts photonic excitation into a charge separation. The eukaryotic PSI reaction center is composed of at least 11 subunits. P700 is a chlorophyll a/chlorophyll a' dimer, A0 is one or more chlorophyll a, A1 is one or both phylloquinones and FX is a shared 4Fe-4S iron-sulfur center. is required as a cofactor.

It is found in the plastid. The protein localises to the chloroplast thylakoid membrane. The enzyme catalyses reduced [plastocyanin] + hnu + oxidized [2Fe-2S]-[ferredoxin] = oxidized [plastocyanin] + reduced [2Fe-2S]-[ferredoxin]. In terms of biological role, psaA and PsaB bind P700, the primary electron donor of photosystem I (PSI), as well as the electron acceptors A0, A1 and FX. PSI is a plastocyanin-ferredoxin oxidoreductase, converting photonic excitation into a charge separation, which transfers an electron from the donor P700 chlorophyll pair to the spectroscopically characterized acceptors A0, A1, FX, FA and FB in turn. Oxidized P700 is reduced on the lumenal side of the thylakoid membrane by plastocyanin. The chain is Photosystem I P700 chlorophyll a apoprotein A1 from Nicotiana sylvestris (Wood tobacco).